The following is a 151-amino-acid chain: Peptide methionine sulfoxide reductase MsrB (151 aa).

The MsrB domain occupies 5-127 (KEERLKQLTR…NSAALRFVPK (123 aa)). The active-site Nucleophile is cysteine 116.

The protein belongs to the MsrB Met sulfoxide reductase family.

It carries out the reaction L-methionyl-[protein] + [thioredoxin]-disulfide + H2O = L-methionyl-(R)-S-oxide-[protein] + [thioredoxin]-dithiol. The sequence is that of Peptide methionine sulfoxide reductase MsrB from Bacillus licheniformis (strain ATCC 14580 / DSM 13 / JCM 2505 / CCUG 7422 / NBRC 12200 / NCIMB 9375 / NCTC 10341 / NRRL NRS-1264 / Gibson 46).